The following is a 354-amino-acid chain: Protein RecA (354 aa).

ATP is bound at residue 67-74 (GPESSGKT).

The protein belongs to the RecA family.

It localises to the cytoplasm. Its function is as follows. Can catalyze the hydrolysis of ATP in the presence of single-stranded DNA, the ATP-dependent uptake of single-stranded DNA by duplex DNA, and the ATP-dependent hybridization of homologous single-stranded DNAs. It interacts with LexA causing its activation and leading to its autocatalytic cleavage. The chain is Protein RecA from Haemophilus influenzae (strain 86-028NP).